We begin with the raw amino-acid sequence, 126 residues long: Protein ApaG (126 aa).

The region spanning 2–126 (SALDDSIRVE…FRLALPGLLH (125 aa)) is the ApaG domain.

In Shewanella sp. (strain MR-7), this protein is Protein ApaG.